Reading from the N-terminus, the 111-residue chain is Aspartate 1-decarboxylase (111 aa).

Ser-25 acts as the Schiff-base intermediate with substrate; via pyruvic acid in catalysis. A Pyruvic acid (Ser) modification is found at Ser-25. Thr-57 contacts substrate. Residue Tyr-58 is the Proton donor of the active site. Position 73-75 (73-75 (GPA)) interacts with substrate.

Belongs to the PanD family. Heterooctamer of four alpha and four beta subunits. Pyruvate serves as cofactor. Is synthesized initially as an inactive proenzyme, which is activated by self-cleavage at a specific serine bond to produce a beta-subunit with a hydroxyl group at its C-terminus and an alpha-subunit with a pyruvoyl group at its N-terminus.

Its subcellular location is the cytoplasm. It catalyses the reaction L-aspartate + H(+) = beta-alanine + CO2. It functions in the pathway cofactor biosynthesis; (R)-pantothenate biosynthesis; beta-alanine from L-aspartate: step 1/1. Functionally, catalyzes the pyruvoyl-dependent decarboxylation of aspartate to produce beta-alanine. The chain is Aspartate 1-decarboxylase from Coxiella burnetii (strain RSA 493 / Nine Mile phase I).